The chain runs to 804 residues: Probable replication endonuclease from prophage-like region 1 (804 aa).

Active-site O-(5'-phospho-DNA)-tyrosine intermediate residues include Tyr498 and Tyr502.

Belongs to the phage GPA family.

Its function is as follows. Possible endonuclease which induces a single-strand cut and initiates DNA replication. The protein is Probable replication endonuclease from prophage-like region 1 of Salmonella typhi.